A 142-amino-acid chain; its full sequence is Large ribosomal subunit protein uL11 (142 aa).

This sequence belongs to the universal ribosomal protein uL11 family. As to quaternary structure, part of the ribosomal stalk of the 50S ribosomal subunit. Interacts with L10 and the large rRNA to form the base of the stalk. L10 forms an elongated spine to which L12 dimers bind in a sequential fashion forming a multimeric L10(L12)X complex. One or more lysine residues are methylated.

Its function is as follows. Forms part of the ribosomal stalk which helps the ribosome interact with GTP-bound translation factors. The polypeptide is Large ribosomal subunit protein uL11 (Photorhabdus laumondii subsp. laumondii (strain DSM 15139 / CIP 105565 / TT01) (Photorhabdus luminescens subsp. laumondii)).